The sequence spans 488 residues: Cobyric acid synthase (488 aa).

Positions 254–442 (KFKIVVPVLP…VHGLFGMDTQ (189 aa)) constitute a GATase cobBQ-type domain. C336 (nucleophile) is an active-site residue. Residue H434 is part of the active site.

This sequence belongs to the CobB/CobQ family. CobQ subfamily.

The protein operates within cofactor biosynthesis; adenosylcobalamin biosynthesis. Its function is as follows. Catalyzes amidations at positions B, D, E, and G on adenosylcobyrinic A,C-diamide. NH(2) groups are provided by glutamine, and one molecule of ATP is hydrogenolyzed for each amidation. The chain is Cobyric acid synthase from Beijerinckia indica subsp. indica (strain ATCC 9039 / DSM 1715 / NCIMB 8712).